The primary structure comprises 429 residues: MTVTKEAPEVMPFEGLTEEINLMSDNERVWWQKTGSMLSRVLSSADYTWKEQHKHLKFYAQVLLPHLGPYPQSFRSSITRSGLPFELSINYQQNGNPLVVRIGFEPLNALSGTPDDPFNQAPAAEVLSLLDQMHIPGFDSQIWDKAVEHHTVNHTEREALRDSDLGAGYIRSQTAYGFDLLRDGNIAVKGYSFPALKCQITGQSMAQMMAGLVADLAPLVDCSQAFAIVDEYLQDTGYDERAFFSWDFVEPSRSRLKLYTGSSSVTWGKLAEVWTLGNRVQNPTVARGLEYLRQLFDLIKLSDGQRNIVVAFDDRQDSSKETPLLWNYEMRAGDPTPLTKIYFPVHGENDLQVINGVAEFLCQIGLSHGKTYVEKVKSYYPGIDLSTTERFTSWVSFAYTEKTGVYLSTYYHSSTDNPWKMTTEEDSQL.

Dimethylallyl diphosphate-binding residues include R101, K189, Y191, K257, Y259, Y342, Y406, and Y410.

The protein belongs to the tryptophan dimethylallyltransferase family.

It catalyses the reaction cyclo(L-Trp-L-Trp) + 2 dimethylallyl diphosphate = cyclo(N(8)-(alpha,alpha-dimethylallyl)-L-Trp-6a-(alpha,alpha-dimethylallyl)-L-Trp) + 2 diphosphate. The protein operates within alkaloid biosynthesis. Functionally, prenyltransferase; part of the gene cluster that mediates the biosynthesis of okaramine B, a prenylated indole alkaloid that possesses an unusual octacyclic ring system, including a four-membered azetidine ring and an eight-membered azocine ring, and that exhibits insecticidal activity against silkworm larvae. Within the pathway, okaC performs asymmetric reverse prenylation of cyclo(L-Trp-L-Trp) at N-1 and C-2' of the indole ring to produce the cyclic prenylated tryptophan dimer cyclo(N8-(alpha,alpha-dimethylallyl)-L-Trp-6a-(alpha,alpha-dime-thylallyl)-L-Trp). The biosynthesis begins with the NRPS okaA that condenses two tryptophan molecules into cyclo(L-Trp-L-Trp). Prenylation by the prenyltransferase okaC then leads to the formation of cyclo(N8-(alpha,alpha-dimethylallyl)-L-Trp-6a-(alpha,alpha-dime-thylallyl)-L-Trp). This is followed by indole 2,3-epoxidation by the FAD-dependent monooxygenase okaB to facilitate the formation of the hexahydropyrrolo[2,3-b]indole (HPI) moiety of okaramine C. The cytochrome P450 monooxygenase okaD then likely catalyzes formation of the eight-membered ring of okaramine A. The dioxygenase okaE further forms the unusual 2-dimethyl-3-methyl-azetidine ring to yield 12-deshydroxyl okaramine E, as well as the hydroxylation of 12-deshydroxyl okaramine E to produce okaramine E. The cytochrome P450 monoxygenase okaG converts 12-deshydroxyl okaramine E into 3-desmethyl okaramine B which is further methylated by the methyltransferase okaF into okaramine B. In a shunt pathway, okaG and okaF together are also able to convert okaramine E into okaramine D. Okaramine H is produced by nonenzymatic conversion from okaramine A. The polypeptide is Prenyltransferase okaC (Penicillium ochrochloron).